The following is a 240-amino-acid chain: 1-(5-phosphoribosyl)-5-[(5-phosphoribosylamino)methylideneamino] imidazole-4-carboxamide isomerase (240 aa).

D8 serves as the catalytic Proton acceptor. The active-site Proton donor is D129.

This sequence belongs to the HisA/HisF family.

It is found in the cytoplasm. The enzyme catalyses 1-(5-phospho-beta-D-ribosyl)-5-[(5-phospho-beta-D-ribosylamino)methylideneamino]imidazole-4-carboxamide = 5-[(5-phospho-1-deoxy-D-ribulos-1-ylimino)methylamino]-1-(5-phospho-beta-D-ribosyl)imidazole-4-carboxamide. The protein operates within amino-acid biosynthesis; L-histidine biosynthesis; L-histidine from 5-phospho-alpha-D-ribose 1-diphosphate: step 4/9. This chain is 1-(5-phosphoribosyl)-5-[(5-phosphoribosylamino)methylideneamino] imidazole-4-carboxamide isomerase, found in Dinoroseobacter shibae (strain DSM 16493 / NCIMB 14021 / DFL 12).